The chain runs to 621 residues: F-box only protein 21 (621 aa).

The F-box domain occupies 28-77 (SCLVNLPGEVLEYILCCGSLTAADIGRVSSTCRRLRELCQSSGKVWKEQF).

Interacts with SKP1 and CUL1.

Functionally, substrate-recognition component of the SCF (SKP1-CUL1-F-box protein)-type E3 ubiquitin ligase complex. This is F-box only protein 21 (FBXO21) from Pongo abelii (Sumatran orangutan).